The sequence spans 318 residues: Ribosomal RNA small subunit methyltransferase A (318 aa).

S-adenosyl-L-methionine is bound by residues Asn-40, Val-42, Gly-67, Glu-88, Asp-118, and Asn-137. The segment covering 295-305 (SADRGGTDREG) has biased composition (basic and acidic residues). Positions 295-318 (SADRGGTDREGTSPPTAGQGAPAR) are disordered.

Belongs to the class I-like SAM-binding methyltransferase superfamily. rRNA adenine N(6)-methyltransferase family. RsmA subfamily.

It is found in the cytoplasm. It carries out the reaction adenosine(1518)/adenosine(1519) in 16S rRNA + 4 S-adenosyl-L-methionine = N(6)-dimethyladenosine(1518)/N(6)-dimethyladenosine(1519) in 16S rRNA + 4 S-adenosyl-L-homocysteine + 4 H(+). In terms of biological role, specifically dimethylates two adjacent adenosines (A1518 and A1519) in the loop of a conserved hairpin near the 3'-end of 16S rRNA in the 30S particle. May play a critical role in biogenesis of 30S subunits. In Mycolicibacterium paratuberculosis (strain ATCC BAA-968 / K-10) (Mycobacterium paratuberculosis), this protein is Ribosomal RNA small subunit methyltransferase A.